A 504-amino-acid polypeptide reads, in one-letter code: CDK5 regulatory subunit-associated protein 3 (504 aa).

3 consecutive short sequence motifs (shuffled ATG8-binding motif) follow at residues 266–269, 290–293, and 308–311; these read IDWG. The interval 268 to 504 is required for interaction with UFL1 and mediates interaction with CHEK1; that stretch reads WGDFGLEAVS…RPVNLMGTSV (237 aa). Positions 353-368 are RPL10a-binding domain (RBD); that stretch reads DELMELEIFLSQRAVE. Residue Lys-448 forms a Glycyl lysine isopeptide (Lys-Gly) (interchain with G-Cter in SUMO2) linkage.

This sequence belongs to the CDK5RAP3 family. In terms of assembly, substrate adapter component of the UFM1 ribosome E3 ligase (UREL) complex, composed of UFL1, DDRGK1 and CDK5RAP3. Interaction with UFL1 anchors CDK5RAP3 in the cytoplasm, preventing its translocation to the nucleus which allows expression of the CCND1 cyclin and progression of cells through the G1/S transition. Interacts with ATG8 family proteins MAP1LC3A, MAP1LC3B, GABARAP, GABARAPL1 and GABARAPL2. Interacts with CDK5R1; competes with CDK5RAP1 and CDK5RAP2. Interacts with RELA. Interacts with CHEK1; may negatively regulate CHEK1 and thereby stimulate entry into mitosis. Interacts with CDKN2A/ARF and MDM2; forms a ternary complex involved in regulation of p53/TP53. Interacts with MAPK14. Interacts with CCNB1. Interacts with TUBG1; may regulate CDK5RAP3 in mitotic G2/M transition checkpoint. Post-translationally, may be phosphorylated by CDK5. In terms of processing, ubiquitinated. Probably triggers proteasomal degradation and is negatively regulated by UFL1. May be ufmylated. Post-translationally, cleaved by caspases early during apoptosis, the resulting peptides may play a role in rupture of the nuclear envelope. Expressed in vascular endothelium. Up-regulated in failing heart. Highly expressed in the ventricular section in subacute and chronic ischemic heart failure.

The protein resides in the endoplasmic reticulum membrane. The protein localises to the cytoplasm. It localises to the nucleus. It is found in the cytoskeleton. Its subcellular location is the microtubule organizing center. The protein resides in the centrosome. Substrate adapter of E3 ligase complexes mediating ufmylation, the covalent attachment of the ubiquitin-like modifier UFM1 to substrate proteins, and which is involved in various processes, such as ribosome recycling and reticulophagy (also called ER-phagy). As part of the UREL complex, plays a key role in ribosome recycling by promoting mono-ufmylation of RPL26/uL24 subunit of the 60S ribosome. Ufmylation of RPL26/uL24 occurs on free 60S ribosomes following ribosome dissociation: it weakens the junction between post-termination 60S subunits and SEC61 translocons, promoting release and recycling of the large ribosomal subunit from the endoplasmic reticulum membrane. Ufmylation of RPL26/uL24 and subsequent 60S ribosome recycling either take place after normal termination of translation or after ribosome stalling during cotranslational translocation at the endoplasmic reticulum. Within the UREL complex, CDK5RAP3 acts as a substrate adapter that constrains UFL1 ligase activity to mono-ufmylate RPL26/uL24 at 'Lys-134'. The UREL complex is also involved in reticulophagy in response to endoplasmic reticulum stress by promoting ufmylation of proteins such as CYB5R3, thereby promoting lysosomal degradation of ufmylated proteins. Also acts as a regulator of transcription: negatively regulates NF-kappa-B-mediated gene transcription through the control of RELA phosphorylation. Also regulates mitotic G2/M transition checkpoint and mitotic G2 DNA damage checkpoint. Through its interaction with CDKN2A/ARF and MDM2 may induce MDM2-dependent p53/TP53 ubiquitination, stabilization and activation in the nucleus, thereby promoting G1 cell cycle arrest and inhibition of cell proliferation. May also play a role in the rupture of the nuclear envelope during apoptosis. May regulate MAPK14 activity by regulating its dephosphorylation by PPM1D/WIP1. Required for liver development. This Rattus norvegicus (Rat) protein is CDK5 regulatory subunit-associated protein 3.